We begin with the raw amino-acid sequence, 218 residues long: 3-dehydroquinate dehydratase (218 aa).

3-dehydroquinate is bound by residues 29–31 (EFR) and Arg56. The active-site Proton donor/acceptor is the His116. The active-site Schiff-base intermediate with substrate is the Lys142. Residues Arg180, Ser200, and Gln204 each coordinate 3-dehydroquinate.

It belongs to the type-I 3-dehydroquinase family. Homodimer.

It catalyses the reaction 3-dehydroquinate = 3-dehydroshikimate + H2O. The protein operates within metabolic intermediate biosynthesis; chorismate biosynthesis; chorismate from D-erythrose 4-phosphate and phosphoenolpyruvate: step 3/7. In terms of biological role, involved in the third step of the chorismate pathway, which leads to the biosynthesis of aromatic amino acids. Catalyzes the cis-dehydration of 3-dehydroquinate (DHQ) and introduces the first double bond of the aromatic ring to yield 3-dehydroshikimate. This is 3-dehydroquinate dehydratase from Methanococcus maripaludis (strain DSM 14266 / JCM 13030 / NBRC 101832 / S2 / LL).